The following is a 618-amino-acid chain: Proline--tRNA ligase (618 aa).

The protein belongs to the class-II aminoacyl-tRNA synthetase family. ProS type 1 subfamily. Homodimer.

Its subcellular location is the cytoplasm. It catalyses the reaction tRNA(Pro) + L-proline + ATP = L-prolyl-tRNA(Pro) + AMP + diphosphate. Catalyzes the attachment of proline to tRNA(Pro) in a two-step reaction: proline is first activated by ATP to form Pro-AMP and then transferred to the acceptor end of tRNA(Pro). As ProRS can inadvertently accommodate and process non-cognate amino acids such as alanine and cysteine, to avoid such errors it has two additional distinct editing activities against alanine. One activity is designated as 'pretransfer' editing and involves the tRNA(Pro)-independent hydrolysis of activated Ala-AMP. The other activity is designated 'posttransfer' editing and involves deacylation of mischarged Ala-tRNA(Pro). The misacylated Cys-tRNA(Pro) is not edited by ProRS. The protein is Proline--tRNA ligase of Streptococcus pyogenes serotype M3 (strain ATCC BAA-595 / MGAS315).